The chain runs to 381 residues: MARDYYGLLGVSRGASDAEIKRAYRKLARELHPDVNPDEAAQAKFKEISVAYEVLSDPEKRRIVDLGGDPLEGAAAAGGGFGGFGGLGDVFEAFFGGGFGGGTTSRGPIGRVRPGSDSLLRMRLDLEECATGVTKQVTVDTAVLCDRCHGKGTNGDSAPVPCDTCGGRGEVQTVQRSLLGQVMTSRPCPTCRGVGVVIPDPCHQCMGDGRVRARREISVKIPAGVGDGMRVRLAAQGEVGPGGGPAGDLYVEVHEQPHDVFVREGDDLHCTVSVPMVDAALGATVTVDAILDGVSEITIPPGTQPGSVITLRGHGMPHLRSGTRGDLHVHVEVVVPSRLDARDTELLREFKGRRGRDVPEVRSTHAGGGLFSRLRETFTGR.

In terms of domain architecture, J spans 4-68; sequence DYYGLLGVSR…EKRRIVDLGG (65 aa). The CR-type zinc finger occupies 132 to 214; that stretch reads GVTKQVTVDT…CMGDGRVRAR (83 aa). The Zn(2+) site is built by C145, C148, C162, C165, C188, C191, C202, and C205. 4 CXXCXGXG motif repeats span residues 145 to 152, 162 to 169, 188 to 195, and 202 to 209; these read CDRCHGKG, CDTCGGRG, CPTCRGVG, and CHQCMGDG.

The protein belongs to the DnaJ family. Homodimer. Zn(2+) is required as a cofactor.

It is found in the cytoplasm. Its function is as follows. Participates actively in the response to hyperosmotic and heat shock by preventing the aggregation of stress-denatured proteins and by disaggregating proteins, also in an autonomous, DnaK-independent fashion. Unfolded proteins bind initially to DnaJ; upon interaction with the DnaJ-bound protein, DnaK hydrolyzes its bound ATP, resulting in the formation of a stable complex. GrpE releases ADP from DnaK; ATP binding to DnaK triggers the release of the substrate protein, thus completing the reaction cycle. Several rounds of ATP-dependent interactions between DnaJ, DnaK and GrpE are required for fully efficient folding. Also involved, together with DnaK and GrpE, in the DNA replication of plasmids through activation of initiation proteins. This chain is Chaperone protein DnaJ 1, found in Mycolicibacterium paratuberculosis (strain ATCC BAA-968 / K-10) (Mycobacterium paratuberculosis).